The primary structure comprises 759 residues: LON peptidase N-terminal domain and RING finger protein 3 (759 aa).

The interval 1–69 (MESVRIEQML…PGTSTPESKV (69 aa)) is disordered. The segment covering 57–66 (EQSPGTSTPE) has biased composition (polar residues). The stretch at 67–100 (SKVLLTQADALASRGRIREALEVYRQLSERQQLV) is one TPR 1 repeat. The segment at 158–196 (CRKCHGFLSDPVSLSCGHTFCKLCLERGRAADRRCALCG) adopts an RING-type 1 zinc-finger fold. TPR repeat units follow at residues 243–276 (ASQL…APND), 278–310 (LLYS…RPMG), and 312–344 (KAHF…DGKN). The segment at 360–454 (HCSSQEEAAA…TDQGDKPALS (95 aa)) is disordered. Positions 380–393 (AKVKGDGQQHHMKD) are enriched in basic and acidic residues. The RING-type 2 zinc finger occupies 467 to 505 (CALCMRLFYEPVTTPCGHTFCLKCLERCLDHNAKCPLCK). The Lon N-terminal domain occupies 546-755 (MEELSNLNKN…GIRRVLAFIS (210 aa)).

This Homo sapiens (Human) protein is LON peptidase N-terminal domain and RING finger protein 3 (LONRF3).